We begin with the raw amino-acid sequence, 195 residues long: FMN-dependent NADH:quinone oxidoreductase 2 (195 aa).

FMN is bound by residues 16 to 18 (SVS) and 85 to 88 (MWNL).

This sequence belongs to the azoreductase type 1 family. In terms of assembly, homodimer. FMN is required as a cofactor.

It catalyses the reaction 2 a quinone + NADH + H(+) = 2 a 1,4-benzosemiquinone + NAD(+). The enzyme catalyses N,N-dimethyl-1,4-phenylenediamine + anthranilate + 2 NAD(+) = 2-(4-dimethylaminophenyl)diazenylbenzoate + 2 NADH + 2 H(+). In terms of biological role, quinone reductase that provides resistance to thiol-specific stress caused by electrophilic quinones. Also exhibits azoreductase activity. Catalyzes the reductive cleavage of the azo bond in aromatic azo compounds to the corresponding amines. In Photobacterium profundum (strain SS9), this protein is FMN-dependent NADH:quinone oxidoreductase 2.